The sequence spans 384 residues: Chaperone protein DnaJ (384 aa).

The J domain occupies 5 to 70; that stretch reads DFYEVLGVSK…DKKAAYDRYG (66 aa). The segment at 143-221 adopts a CR-type zinc-finger fold; that stretch reads GAQKTITVPG…CHGSGRIEKE (79 aa). The Zn(2+) site is built by Cys-156, Cys-159, Cys-173, Cys-176, Cys-195, Cys-198, Cys-209, and Cys-212. CXXCXGXG motif repeat units follow at residues 156–163, 173–180, 195–202, and 209–216; these read CGSCNGTG, CPTCSGLG, CPTCGGQG, and CRVCHGSG.

Belongs to the DnaJ family. Homodimer. Requires Zn(2+) as cofactor.

The protein resides in the cytoplasm. Functionally, participates actively in the response to hyperosmotic and heat shock by preventing the aggregation of stress-denatured proteins and by disaggregating proteins, also in an autonomous, DnaK-independent fashion. Unfolded proteins bind initially to DnaJ; upon interaction with the DnaJ-bound protein, DnaK hydrolyzes its bound ATP, resulting in the formation of a stable complex. GrpE releases ADP from DnaK; ATP binding to DnaK triggers the release of the substrate protein, thus completing the reaction cycle. Several rounds of ATP-dependent interactions between DnaJ, DnaK and GrpE are required for fully efficient folding. Also involved, together with DnaK and GrpE, in the DNA replication of plasmids through activation of initiation proteins. The chain is Chaperone protein DnaJ from Rhodobacter capsulatus (Rhodopseudomonas capsulata).